Consider the following 855-residue polypeptide: Valine--tRNA ligase (855 aa).

Positions 44–54 (PNVTGVLHIGH) match the 'HIGH' region motif. Residues 524-528 (KMSKT) carry the 'KMSKS' region motif. Position 527 (lysine 527) interacts with ATP. Residues 797–827 (KVEEDPARKQKEREQLEKNIANSKRQLGDEV) adopt a coiled-coil conformation.

It belongs to the class-I aminoacyl-tRNA synthetase family. ValS type 1 subfamily. In terms of assembly, monomer.

Its subcellular location is the cytoplasm. The enzyme catalyses tRNA(Val) + L-valine + ATP = L-valyl-tRNA(Val) + AMP + diphosphate. Functionally, catalyzes the attachment of valine to tRNA(Val). As ValRS can inadvertently accommodate and process structurally similar amino acids such as threonine, to avoid such errors, it has a 'posttransfer' editing activity that hydrolyzes mischarged Thr-tRNA(Val) in a tRNA-dependent manner. The protein is Valine--tRNA ligase of Solibacter usitatus (strain Ellin6076).